Reading from the N-terminus, the 183-residue chain is ATP synthase subunit delta (183 aa).

The protein belongs to the ATPase delta chain family. F-type ATPases have 2 components, F(1) - the catalytic core - and F(0) - the membrane proton channel. F(1) has five subunits: alpha(3), beta(3), gamma(1), delta(1), epsilon(1). F(0) has three main subunits: a(1), b(2) and c(10-14). The alpha and beta chains form an alternating ring which encloses part of the gamma chain. F(1) is attached to F(0) by a central stalk formed by the gamma and epsilon chains, while a peripheral stalk is formed by the delta and b chains.

The protein localises to the cell inner membrane. F(1)F(0) ATP synthase produces ATP from ADP in the presence of a proton or sodium gradient. F-type ATPases consist of two structural domains, F(1) containing the extramembraneous catalytic core and F(0) containing the membrane proton channel, linked together by a central stalk and a peripheral stalk. During catalysis, ATP synthesis in the catalytic domain of F(1) is coupled via a rotary mechanism of the central stalk subunits to proton translocation. In terms of biological role, this protein is part of the stalk that links CF(0) to CF(1). It either transmits conformational changes from CF(0) to CF(1) or is implicated in proton conduction. The polypeptide is ATP synthase subunit delta (Thermotoga maritima (strain ATCC 43589 / DSM 3109 / JCM 10099 / NBRC 100826 / MSB8)).